A 140-amino-acid polypeptide reads, in one-letter code: Small ribosomal subunit protein uS12m (140 aa).

The N-terminal 30 residues, 1–30 (MNFLRQSFGITKQLASQAIQCSYETAVRGM), are a transit peptide targeting the mitochondrion.

It belongs to the universal ribosomal protein uS12 family.

The protein resides in the mitochondrion. This Drosophila melanogaster (Fruit fly) protein is Small ribosomal subunit protein uS12m (tko).